Here is a 390-residue protein sequence, read N- to C-terminus: tRNA-specific 2-thiouridylase MnmA (390 aa).

ATP contacts are provided by residues 33 to 40 (AMSGGVDS) and methionine 59. Catalysis depends on cysteine 131, which acts as the Nucleophile. A disulfide bridge connects residues cysteine 131 and cysteine 230. Glycine 155 provides a ligand contact to ATP. Residues 180-182 (KDQ) form an interaction with tRNA region. Cysteine 230 (cysteine persulfide intermediate) is an active-site residue.

It belongs to the MnmA/TRMU family.

The protein resides in the cytoplasm. It carries out the reaction S-sulfanyl-L-cysteinyl-[protein] + uridine(34) in tRNA + AH2 + ATP = 2-thiouridine(34) in tRNA + L-cysteinyl-[protein] + A + AMP + diphosphate + H(+). In terms of biological role, catalyzes the 2-thiolation of uridine at the wobble position (U34) of tRNA, leading to the formation of s(2)U34. In Symbiobacterium thermophilum (strain DSM 24528 / JCM 14929 / IAM 14863 / T), this protein is tRNA-specific 2-thiouridylase MnmA.